A 278-amino-acid polypeptide reads, in one-letter code: 3-methyl-2-oxobutanoate hydroxymethyltransferase (278 aa).

Mg(2+)-binding residues include Asp43 and Asp82. 3-methyl-2-oxobutanoate is bound by residues Asp43–Ser44, Asp82, and Lys112. Glu114 contributes to the Mg(2+) binding site. Glu181 functions as the Proton acceptor in the catalytic mechanism.

This sequence belongs to the PanB family. In terms of assembly, homodecamer; pentamer of dimers. It depends on Mg(2+) as a cofactor.

The protein localises to the cytoplasm. The catalysed reaction is 3-methyl-2-oxobutanoate + (6R)-5,10-methylene-5,6,7,8-tetrahydrofolate + H2O = 2-dehydropantoate + (6S)-5,6,7,8-tetrahydrofolate. The protein operates within cofactor biosynthesis; (R)-pantothenate biosynthesis; (R)-pantoate from 3-methyl-2-oxobutanoate: step 1/2. Its function is as follows. Catalyzes the reversible reaction in which hydroxymethyl group from 5,10-methylenetetrahydrofolate is transferred onto alpha-ketoisovalerate to form ketopantoate. The sequence is that of 3-methyl-2-oxobutanoate hydroxymethyltransferase from Desulfitobacterium hafniense (strain DSM 10664 / DCB-2).